Reading from the N-terminus, the 468-residue chain is 3-isopropylmalate dehydratase large subunit (468 aa).

[4Fe-4S] cluster is bound by residues Cys348, Cys409, and Cys412.

Belongs to the aconitase/IPM isomerase family. LeuC type 1 subfamily. Heterodimer of LeuC and LeuD. The cofactor is [4Fe-4S] cluster.

It carries out the reaction (2R,3S)-3-isopropylmalate = (2S)-2-isopropylmalate. It functions in the pathway amino-acid biosynthesis; L-leucine biosynthesis; L-leucine from 3-methyl-2-oxobutanoate: step 2/4. Catalyzes the isomerization between 2-isopropylmalate and 3-isopropylmalate, via the formation of 2-isopropylmaleate. This is 3-isopropylmalate dehydratase large subunit from Dechloromonas aromatica (strain RCB).